The chain runs to 332 residues: Large ribosomal subunit protein mL44 (332 aa).

A mitochondrion-targeting transit peptide spans 1 to 30; the sequence is MASGLVRLLQQGPRCLLAPVAPKLVPPVRG. Residues 86 to 228 form the RNase III domain; sequence DLLKTAFVNS…LITQMTGKEL (143 aa). Residues 236 to 306 form the DRBM domain; sequence NPMGLLVEEL…ARVALRKLYG (71 aa).

The protein belongs to the ribonuclease III family. Mitochondrion-specific ribosomal protein mL44 subfamily. Component of the mitochondrial ribosome large subunit (39S) which comprises a 16S rRNA and about 50 distinct proteins.

It is found in the mitochondrion. In terms of biological role, component of the 39S subunit of mitochondrial ribosome. May have a function in the assembly/stability of nascent mitochondrial polypeptides exiting the ribosome. The protein is Large ribosomal subunit protein mL44 (MRPL44) of Pongo abelii (Sumatran orangutan).